Reading from the N-terminus, the 534-residue chain is Probable protein kinase UbiB (534 aa).

The chain crosses the membrane as a helical span at residues 23 to 43; that stretch reads DLLFDLPLPWFLLALRFALPW. The Protein kinase domain maps to 125-492; sequence RFDIEPLASA…WHKRKDDWFL (368 aa). ATP-binding positions include 131–139 and K153; that span reads LASASVAQV. The Proton acceptor role is filled by D288. The next 2 helical transmembrane spans lie at 490–510 and 512–532; these read WFLR…AAGG and LHEL…YLIV.

It belongs to the ABC1 family. UbiB subfamily.

The protein resides in the cell inner membrane. Its pathway is cofactor biosynthesis; ubiquinone biosynthesis [regulation]. Functionally, is probably a protein kinase regulator of UbiI activity which is involved in aerobic coenzyme Q (ubiquinone) biosynthesis. The polypeptide is Probable protein kinase UbiB (Pseudomonas fluorescens (strain ATCC BAA-477 / NRRL B-23932 / Pf-5)).